A 2365-amino-acid polypeptide reads, in one-letter code: TRIO and F-actin-binding protein (2365 aa).

Disordered stretches follow at residues 48–1106 (VPYC…HEPL), 1168–1554 (HRDA…SERR), 1593–1667 (LPRK…WPKI), and 1679–1751 (AGLE…TSWR). A compositionally biased stretch (low complexity) spans 132-151 (SDPTSSPDSATPDDTSNSSS). Position 221 is a phosphothreonine (His221). 13 stretches are compositionally biased toward polar residues: residues 239 to 271 (TLTQ…QAAS), 291 to 375 (RASS…TPQR), 403 to 422 (RTSC…SPNR), 429 to 471 (RTSC…SPNR), 478 to 520 (RTSC…SPNR), 527 to 569 (RTSC…SPNR), 576 to 618 (RTSC…SPNR), 625 to 650 (RTSC…SPRT), 661 to 674 (SSPN…NPRT), 683 to 701 (RASS…TSCA), 709 to 722 (SSPN…NPRT), 745 to 785 (RTSC…SPNR), and 807 to 837 (IRAT…PKTS). Residues 324 to 348 (STQEDTPRASSTQWNTPRASSPSRS) are essentiel for its aggregation. Gln457 bears the Phosphothreonine mark. The segment covering 839 to 854 (TKRDNLRPTCTQRDRT) has biased composition (basic and acidic residues). 3 stretches are compositionally biased toward polar residues: residues 855 to 898 (QSFS…SSPH), 913 to 927 (PTQS…PSRS), and 945 to 994 (DRPQ…TSSP). The span at 1045 to 1056 (RAPESEPPHHEP) shows a compositional bias: basic and acidic residues. Residues 1195–1206 (SMESLAPSTDSL) show a composition bias toward polar residues. Basic and acidic residues-rich tracts occupy residues 1260-1270 (ETRHNLEREEY) and 1303-1319 (GRAE…RKSE). Residues 1332–1349 (SQQPSQGQSQLLRRQSSP) show a composition bias toward low complexity. Basic and acidic residues-rich tracts occupy residues 1378 to 1387 (SPEKRPEGDR) and 1402 to 1411 (TPERELRTQR). Gly residues predominate over residues 1452 to 1461 (GGLGPGGWWG). A compositionally biased stretch (basic and acidic residues) spans 1494–1508 (WEEKPTHELPRELGK). A compositionally biased stretch (polar residues) spans 1524-1534 (ESSQSWHSGTP). Over residues 1594-1606 (PRKDPAGHRDDLA) the composition is skewed to basic and acidic residues. The span at 1645–1664 (ALQSQSPVQLPSPACTSTQW) shows a compositional bias: polar residues. Residues 1696–1705 (PSLPELQFQP) are compositionally biased toward low complexity. Basic and acidic residues predominate over residues 1724–1735 (KQADSADKRPAE). The region spanning 1778–1887 (LNFKKGWMSI…WIEALRKTVR (110 aa)) is the PH domain. Ser1796 carries the phosphoserine modification. 2 disordered regions span residues 1889–2017 (TSAP…LTED) and 2174–2194 (LSKT…HQSD). Arg1930 is modified (omega-N-methylarginine). Phosphoserine occurs at positions 1949 and 1955. Basic and acidic residues predominate over residues 1965 to 1997 (TPDRLAKQEELERDLAQRSEERRKWFEATDSRT). 2 coiled-coil regions span residues 2062–2247 (SDGH…NQEL) and 2281–2361 (ELEV…SMRN).

Isoform 1 forms aggregates. Isoform 1 binds to TRIO and F-actin. Isoform 1 may also interact with myosin II. Interacts with HECTD3. Interacts with PJVK. Interacts with TERF1; mediates TERF1 localization to the centrosome. In terms of processing, ubiquitinated by HECTD3, leading to its degradation by the proteasome. Post-translationally, phosphorylation at Thr-457 by PLK1 ensures mitotic progression and is essential for accurate chromosome segregation. Phosphorylation at residues Thr-221 and Thr-457 by kinase NEK2A and PLK1 coordinates TERF1 translocation from telomere to spindle pole. As to expression, widely expressed. Highly expressed in heart and placenta. Expressed in fetal brain, retina and cochlea but is not detectable in the other tissues.

The protein localises to the nucleus. The protein resides in the cytoplasm. It localises to the cytoskeleton. It is found in the microtubule organizing center. Its subcellular location is the centrosome. The protein localises to the midbody. The protein resides in the chromosome. It localises to the telomere. Its function is as follows. Regulates actin cytoskeletal organization, cell spreading and cell contraction by directly binding and stabilizing filamentous F-actin and prevents its depolymerization. May also serve as a linker protein to recruit proteins required for F-actin formation and turnover. Essential for correct mitotic progression. Functionally, plays a pivotal role in the formation of stereocilia rootlets. This is TRIO and F-actin-binding protein (TRIOBP) from Homo sapiens (Human).